The chain runs to 153 residues: ATP synthase subunit a (153 aa).

2 helical membrane passes run 43–63 and 104–124; these read AFHL…LLIF and IAPL…VDLI.

The protein belongs to the ATPase A chain family. F-type ATPases have 2 components, CF(1) - the catalytic core - and CF(0) - the membrane proton channel. CF(1) has five subunits: alpha(3), beta(3), gamma(1), delta(1), epsilon(1). CF(0) has three main subunits: a(1), b(2) and c(9-12). The alpha and beta chains form an alternating ring which encloses part of the gamma chain. CF(1) is attached to CF(0) by a central stalk formed by the gamma and epsilon chains, while a peripheral stalk is formed by the delta and b chains.

It localises to the cell inner membrane. Its function is as follows. Key component of the proton channel; it plays a direct role in the translocation of protons across the membrane. The sequence is that of ATP synthase subunit a (atpB) from Pseudomonas putida (Arthrobacter siderocapsulatus).